Consider the following 156-residue polypeptide: MARRRRAEVRPLQPDLVYQDVLVSAMINKIMRDGKKNLASRIFYGACRLVQERTGQEPLKVFKQAFDNVKPRVEVRSRRVGGSTYQVPVEPTERRKQSLALRWMLSAVEGRPERTAIERLAGEMMDAAQGRGGAIKKKDDVERMAEANRAYAHYRW.

Belongs to the universal ribosomal protein uS7 family. Part of the 30S ribosomal subunit. Contacts proteins S9 and S11.

In terms of biological role, one of the primary rRNA binding proteins, it binds directly to 16S rRNA where it nucleates assembly of the head domain of the 30S subunit. Is located at the subunit interface close to the decoding center, probably blocks exit of the E-site tRNA. The chain is Small ribosomal subunit protein uS7 from Deinococcus geothermalis (strain DSM 11300 / CIP 105573 / AG-3a).